The chain runs to 325 residues: Tetraacyldisaccharide 4'-kinase (325 aa).

Residue 53–60 participates in ATP binding; it reads SVGGNGKT.

Belongs to the LpxK family.

The enzyme catalyses a lipid A disaccharide + ATP = a lipid IVA + ADP + H(+). Its pathway is glycolipid biosynthesis; lipid IV(A) biosynthesis; lipid IV(A) from (3R)-3-hydroxytetradecanoyl-[acyl-carrier-protein] and UDP-N-acetyl-alpha-D-glucosamine: step 6/6. Functionally, transfers the gamma-phosphate of ATP to the 4'-position of a tetraacyldisaccharide 1-phosphate intermediate (termed DS-1-P) to form tetraacyldisaccharide 1,4'-bis-phosphate (lipid IVA). The sequence is that of Tetraacyldisaccharide 4'-kinase from Mannheimia succiniciproducens (strain KCTC 0769BP / MBEL55E).